The chain runs to 531 residues: Na(+)/H(+) antiporter NhaB (531 aa).

12 helical membrane passes run 13–33, 34–54, 90–110, 121–141, 145–165, 206–226, 242–262, 308–328, 352–372, 394–414, 456–476, and 482–502; these read FLGKAPDWYKIAIISFLIINP, LVFFFVDPFAAGWLLVVEFIF, LVANIEVLLLLVFMVAGIYFM, ILIGIKSKTALSVAFCFTAAF, FLDALTVIAVVISVAVGFYAI, LLMHAGVGTALGGVMTMVGEP, FIIRMLPVTAPVFICGLLTCV, VIAVWLIVALAMHLAAVGLIG, EEALPFTALLAVFFAIVAVII, LALFYVANGILSMVSDNVFVG, GQAAFLFLLTSALAPLIQLSY, and MALPYTIVLALVGLFGISFLL.

It belongs to the NhaB Na(+)/H(+) (TC 2.A.34) antiporter family.

It is found in the cell inner membrane. The enzyme catalyses 2 Na(+)(in) + 3 H(+)(out) = 2 Na(+)(out) + 3 H(+)(in). Functionally, na(+)/H(+) antiporter that extrudes sodium in exchange for external protons. This chain is Na(+)/H(+) antiporter NhaB, found in Aliivibrio salmonicida (strain LFI1238) (Vibrio salmonicida (strain LFI1238)).